The following is a 484-amino-acid chain: MKIPEAVNHINVQNNIDLVDGKINPNKDTKALQKNISCVTNSSSSGISEKHLDHCADTVKSFLRKSIAAQSYSKMFSQGTSFKSLNLSIEAPSGARSSFRSLEHLDKVSRHYLSEIIQKTHPLSSDERHLLSIIINSDFNFRHQSNANLSNNTLNIKSFDKIKSENIQTYKNTFSEDIEEIANHDFVFFGVEISNHQETLPLNKTHHTVDFGANAYIIDHDSPYGYMTLTDHFDNAIPPVFYHEHQSFFLDNFKEVVDEVSRYVHGNQGKTDVPIFNTKDMRLGIGLHLIDFIRKSKDQRFREFCYNKNIDPVSLDRIINFVFQLEYHIPRMLSTDNFKKIRLRDISLEDAIKASNYEEINNKVTDKKMAHQALAYSLGNAKSDMALYLLSKFNFTKQDIAEMEKMNNNMYCELYDVEYLLSEDSANYKVLEYFISNGLVDVNKRFQKANSGDTMLDNAMKSKDSKTIDFLLKNGAVSGKRFGR.

NAD(+)-binding residues include H143, Q144, S145, L149, I162, N172, F188, H206, F211, D231, and E326. E326 is an active-site residue. ANK repeat units follow at residues 414–444 (LYDV…DVNK) and 451–480 (SGDT…VSGK).

It belongs to the OspC family.

It is found in the secreted. It catalyses the reaction L-arginyl-[protein] + NAD(+) = ADP-riboxanated L-argininyl-[protein] + nicotinamide + NH4(+) + H(+). ADP-riboxanase effector that mediates arginine ADP-riboxanation of host caspases. ADP-riboxanation of host apoptotic caspases (CASP3 and CASP9) prevents their activation, thereby inhibiting host cell extrinsic and intrinsic apoptosis. Does not catalyze ADP-riboxanation of host CASP4/CASP11 or CASP8. In contrast to Ospc1 and OspC3, not able to inactivate host calmodulin. The sequence is that of Arginine ADP-riboxanase OspC2 from Shigella flexneri.